We begin with the raw amino-acid sequence, 393 residues long: Acetate kinase (393 aa).

Asn6 is a Mg(2+) binding site. Lys13 lines the ATP pocket. Arg87 is a binding site for substrate. Residue Asp143 is the Proton donor/acceptor of the active site. ATP-binding positions include 203–207 (HLGNG), 278–280 (DMR), and 326–330 (GIGEN). Residue Glu380 coordinates Mg(2+).

The protein belongs to the acetokinase family. In terms of assembly, homodimer. It depends on Mg(2+) as a cofactor. Requires Mn(2+) as cofactor.

The protein resides in the cytoplasm. The enzyme catalyses acetate + ATP = acetyl phosphate + ADP. It participates in metabolic intermediate biosynthesis; acetyl-CoA biosynthesis; acetyl-CoA from acetate: step 1/2. In terms of biological role, catalyzes the formation of acetyl phosphate from acetate and ATP. Can also catalyze the reverse reaction. The protein is Acetate kinase of Mycoplasma capricolum subsp. capricolum (strain California kid / ATCC 27343 / NCTC 10154).